A 464-amino-acid chain; its full sequence is UDP-N-acetylmuramate--L-alanine ligase (464 aa).

ATP is bound at residue 118-124 (GTHGKTT).

It belongs to the MurCDEF family.

It is found in the cytoplasm. It carries out the reaction UDP-N-acetyl-alpha-D-muramate + L-alanine + ATP = UDP-N-acetyl-alpha-D-muramoyl-L-alanine + ADP + phosphate + H(+). The protein operates within cell wall biogenesis; peptidoglycan biosynthesis. In terms of biological role, cell wall formation. This chain is UDP-N-acetylmuramate--L-alanine ligase, found in Dinoroseobacter shibae (strain DSM 16493 / NCIMB 14021 / DFL 12).